The primary structure comprises 228 residues: Phosphoribosylformylglycinamidine synthase subunit PurQ (228 aa).

The 224-residue stretch at 2-225 folds into the Glutamine amidotransferase type-1 domain; sequence KAAVISFPGS…INQTEGADVR (224 aa). The active-site Nucleophile is the Cys-86. Active-site residues include His-194 and Glu-196.

As to quaternary structure, part of the FGAM synthase complex composed of 1 PurL, 1 PurQ and 2 PurS subunits.

The protein localises to the cytoplasm. It carries out the reaction N(2)-formyl-N(1)-(5-phospho-beta-D-ribosyl)glycinamide + L-glutamine + ATP + H2O = 2-formamido-N(1)-(5-O-phospho-beta-D-ribosyl)acetamidine + L-glutamate + ADP + phosphate + H(+). It catalyses the reaction L-glutamine + H2O = L-glutamate + NH4(+). The protein operates within purine metabolism; IMP biosynthesis via de novo pathway; 5-amino-1-(5-phospho-D-ribosyl)imidazole from N(2)-formyl-N(1)-(5-phospho-D-ribosyl)glycinamide: step 1/2. Its function is as follows. Part of the phosphoribosylformylglycinamidine synthase complex involved in the purines biosynthetic pathway. Catalyzes the ATP-dependent conversion of formylglycinamide ribonucleotide (FGAR) and glutamine to yield formylglycinamidine ribonucleotide (FGAM) and glutamate. The FGAM synthase complex is composed of three subunits. PurQ produces an ammonia molecule by converting glutamine to glutamate. PurL transfers the ammonia molecule to FGAR to form FGAM in an ATP-dependent manner. PurS interacts with PurQ and PurL and is thought to assist in the transfer of the ammonia molecule from PurQ to PurL. The chain is Phosphoribosylformylglycinamidine synthase subunit PurQ from Lacticaseibacillus paracasei (strain ATCC 334 / BCRC 17002 / CCUG 31169 / CIP 107868 / KCTC 3260 / NRRL B-441) (Lactobacillus paracasei).